The following is a 180-amino-acid chain: Crossover junction endodeoxyribonuclease RuvC (180 aa).

Active-site residues include aspartate 7, glutamate 66, and aspartate 138. Residues aspartate 7, glutamate 66, and aspartate 138 each contribute to the Mg(2+) site.

The protein belongs to the RuvC family. Homodimer which binds Holliday junction (HJ) DNA. The HJ becomes 2-fold symmetrical on binding to RuvC with unstacked arms; it has a different conformation from HJ DNA in complex with RuvA. In the full resolvosome a probable DNA-RuvA(4)-RuvB(12)-RuvC(2) complex forms which resolves the HJ. Mg(2+) is required as a cofactor.

It localises to the cytoplasm. It carries out the reaction Endonucleolytic cleavage at a junction such as a reciprocal single-stranded crossover between two homologous DNA duplexes (Holliday junction).. Functionally, the RuvA-RuvB-RuvC complex processes Holliday junction (HJ) DNA during genetic recombination and DNA repair. Endonuclease that resolves HJ intermediates. Cleaves cruciform DNA by making single-stranded nicks across the HJ at symmetrical positions within the homologous arms, yielding a 5'-phosphate and a 3'-hydroxyl group; requires a central core of homology in the junction. The consensus cleavage sequence is 5'-(A/T)TT(C/G)-3'. Cleavage occurs on the 3'-side of the TT dinucleotide at the point of strand exchange. HJ branch migration catalyzed by RuvA-RuvB allows RuvC to scan DNA until it finds its consensus sequence, where it cleaves and resolves the cruciform DNA. This chain is Crossover junction endodeoxyribonuclease RuvC, found in Burkholderia pseudomallei (strain 668).